We begin with the raw amino-acid sequence, 126 residues long: Large ribosomal subunit protein bL12 (126 aa).

Belongs to the bacterial ribosomal protein bL12 family. Homodimer. Part of the ribosomal stalk of the 50S ribosomal subunit. Forms a multimeric L10(L12)X complex, where L10 forms an elongated spine to which 2 to 4 L12 dimers bind in a sequential fashion. Binds GTP-bound translation factors.

Its function is as follows. Forms part of the ribosomal stalk which helps the ribosome interact with GTP-bound translation factors. Is thus essential for accurate translation. The sequence is that of Large ribosomal subunit protein bL12 from Moorella thermoacetica (strain ATCC 39073 / JCM 9320).